The primary structure comprises 171 residues: UPF0316 protein Exig_2248 (171 aa).

Helical transmembrane passes span 4–24 (ILLI…RTIM), 31–51 (IIAG…LGIV), and 57–77 (TVGM…GGFV).

The protein belongs to the UPF0316 family.

The protein localises to the cell membrane. The protein is UPF0316 protein Exig_2248 of Exiguobacterium sibiricum (strain DSM 17290 / CCUG 55495 / CIP 109462 / JCM 13490 / 255-15).